A 148-amino-acid chain; its full sequence is Arginine repressor (148 aa).

This sequence belongs to the ArgR family.

The protein localises to the cytoplasm. Its pathway is amino-acid biosynthesis; L-arginine biosynthesis [regulation]. Functionally, regulates arginine biosynthesis genes. In Koribacter versatilis (strain Ellin345), this protein is Arginine repressor.